The sequence spans 804 residues: MLNLLNLFKKDRLWDFDGGIHPPEMKTQSNGTPLRHLPLPAQFVLPLKQHIGHEGEIGVRPGDQVLRGQPLTFGTGRMLPVHAPTSGTVSKIAPHMTAHPSALAEMCLFILPDGEDRWCEKRPLEDYRSVERSELVARVHQAGVAGLGGAGFPTASKLKGGLHGVNTLIINAAECEPYITADDRLMQDHAAEVLEGSRILAWILQAERVLIGIEDNKPEAIAALKKALGSATDLHIRVIPTKYPSGGAKQLTKILTGKEVPHGGRSTDIGVLMQNVGTAFAVKRAIIDGEPLTERVVTLTGESVAQPGNVWARLGTPISHLLQHAGFIPGAEQMVVMGGPLMGFTLPTLDVPVVKITNCILAPAASEMGQNEAEQGCIRCSACADACPAALLPQQLYWYSRGGDHDKARAHNIADCIECGACAYVCPSNIPLVQYYRQEKAEIQAIDLEAERAALAKNRFEARQQRLEREKAARSAKHQQAKRSVASSDAGAIAAARERVAARQAEGVSPENHADNSLQAAVQAQHEAEVRVHQADLQAANEPVTRQTLDPRKAAVEAAIARTKAKKAAQAAEASPTEAPQQSAPEDEPRKAAVAAAVARTKAKKAAQAAEASPTEAPQQSAPEDVPRKAAVAAAVARAKAKKAAQAAEASATEAPQQSAPEHDPRKAAVAAAVARAKAKKAAQAAEASATEAPLQPAPEDDPRKAAVAAAVARAKAKKAAQAAEASATEAPLQPAPEDDPRKAAVAAAVARAKAKKAAQAAEASATEAPLQPAPEDDPRKAAIAAAIARAKARKTQQPSMQED.

2 4Fe-4S ferredoxin-type domains span residues 366–397 (SEMG…QQLY) and 407–436 (KARA…VQYY). [4Fe-4S] cluster contacts are provided by Cys-377, Cys-380, Cys-383, Cys-387, Cys-416, Cys-419, Cys-422, and Cys-426. 2 disordered regions span residues 466 to 532 (RLER…EVRV) and 567 to 804 (KAAQ…MQED). Low complexity-rich tracts occupy residues 484-495 (SVASSDAGAIAA), 567-582 (KAAQ…APQQ), 592-619 (AAVA…EAPQ), 629-660 (KAAV…QQSA), 668-693 (AAVA…ATEA), 706-731 (AAVA…ATEA), and 744-769 (AAVA…ATEA).

It belongs to the 4Fe4S bacterial-type ferredoxin family. RnfC subfamily. As to quaternary structure, the complex is composed of six subunits: RnfA, RnfB, RnfC, RnfD, RnfE and RnfG. It depends on [4Fe-4S] cluster as a cofactor.

It localises to the cell inner membrane. Functionally, part of a membrane-bound complex that couples electron transfer with translocation of ions across the membrane. The polypeptide is Ion-translocating oxidoreductase complex subunit C (Erwinia tasmaniensis (strain DSM 17950 / CFBP 7177 / CIP 109463 / NCPPB 4357 / Et1/99)).